The chain runs to 65 residues: Large ribosomal subunit protein bL35 (65 aa).

Residues 1-16 are compositionally biased toward basic residues; sequence MVPKQKTHSGAKKRFK. Positions 1 to 39 are disordered; sequence MVPKQKTHSGAKKRFKLTGSGSVSRARAGMRHNFEHRSS.

Belongs to the bacterial ribosomal protein bL35 family.

The sequence is that of Large ribosomal subunit protein bL35 from Tropheryma whipplei (strain TW08/27) (Whipple's bacillus).